The sequence spans 302 residues: tRNA dimethylallyltransferase (302 aa).

9-16 (GATATGKS) provides a ligand contact to ATP. 11–16 (TATGKS) provides a ligand contact to substrate. The interval 34-37 (DSRQ) is interaction with substrate tRNA.

It belongs to the IPP transferase family. As to quaternary structure, monomer. Mg(2+) is required as a cofactor.

The catalysed reaction is adenosine(37) in tRNA + dimethylallyl diphosphate = N(6)-dimethylallyladenosine(37) in tRNA + diphosphate. Functionally, catalyzes the transfer of a dimethylallyl group onto the adenine at position 37 in tRNAs that read codons beginning with uridine, leading to the formation of N6-(dimethylallyl)adenosine (i(6)A). The sequence is that of tRNA dimethylallyltransferase from Nostoc punctiforme (strain ATCC 29133 / PCC 73102).